A 252-amino-acid polypeptide reads, in one-letter code: Two-component response regulator ORR2 (252 aa).

The region spanning 7–157 (RVLVVDDSPV…DVQRLRKCSG (151 aa)) is the Response regulatory domain. Position 90 is a 4-aspartylphosphate (Asp90).

The protein belongs to the ARR family. Type-A subfamily. In terms of processing, two-component system major event consists of a His-to-Asp phosphorelay between a sensor histidine kinase (HK) and a response regulator (RR). In plants, the His-to-Asp phosphorelay involves an additional intermediate named Histidine-containing phosphotransfer protein (HPt). This multistep phosphorelay consists of a His-Asp-His-Asp sequential transfer of a phosphate group between first a His and an Asp of the HK protein, followed by the transfer to a conserved His of the HPt protein and finally the transfer to an Asp in the receiver domain of the RR protein. As to expression, expressed in mature leaves and flowers, and at low levels in roots and shoots.

Its function is as follows. Functions as a response regulator involved in His-to-Asp phosphorelay signal transduction system. Phosphorylation of the Asp residue in the receiver domain activates the ability of the protein to promote the transcription of target genes. Type-A response regulators seem to act as negative regulators of the cytokinin signaling. The sequence is that of Two-component response regulator ORR2 from Oryza sativa subsp. indica (Rice).